Consider the following 190-residue polypeptide: Probable oligoribonuclease (190 aa).

The region spanning 19–181 (MVWVDLEMTG…QDIEESIEEL (163 aa)) is the Exonuclease domain. Residue Y140 is part of the active site.

It belongs to the oligoribonuclease family.

Its function is as follows. 3'-to-5' exoribonuclease specific for small oligoribonucleotides. This Dictyostelium discoideum (Social amoeba) protein is Probable oligoribonuclease (rexo2-1).